Consider the following 1615-residue polypeptide: Ras-responsive element-binding protein 1 (1615 aa).

The tract at residues 1-44 (MMSAVMNVGKIAENGGTSQTVKSPSKSPAPNRIGRRNQETKEEK) is disordered. A compositionally biased stretch (polar residues) spans 15-28 (GGTSQTVKSPSKSP). 3 C2H2-type zinc fingers span residues 47-69 (YTCP…IRQH), 78-100 (HSCS…MLVH), and 106-128 (YKCS…MKIH). The interval 127–169 (IHEKDPNSTASTTPPSPLKAKRLSSKRKFSQDAEMDREERTPA) is disordered. Residues 145–154 (KAKRLSSKRK) are compositionally biased toward basic residues. 3 consecutive C2H2-type zinc fingers follow at residues 189–211 (YHCP…METH), 216–239 (LRCD…AVIH), and 297–319 (FICE…TETH). Residues 511–556 (SAQQASPGCISPSLPPPPLRLIKNSVETSSNSHLSQPGAKSSPSSQ) form a disordered region. Positions 535-549 (SVETSSNSHLSQPGA) are enriched in polar residues. C2H2-type zinc fingers lie at residues 622–644 (YPCR…IRSH), 650–672 (YQCN…LRTH), 732–754 (TVCK…MRTH), and 763–788 (FECK…QHLH). Disordered stretches follow at residues 1025–1044 (AADA…KSGN), 1058–1104 (DSNL…VDLE), and 1123–1162 (KFSP…KRNT). Residues 1026 to 1036 (ADASPKAASSS) are compositionally biased toward low complexity. Positions 1082 to 1095 (TKKRGRKKGTKNKP) are enriched in basic residues. A compositionally biased stretch (polar residues) spans 1123 to 1132 (KFSPFLQSTD). The segment at 1170 to 1192 (ITCPYCPRVFSWASSLQRHMLTH) adopts a C2H2-type 11 zinc-finger fold. 2 disordered regions span residues 1214 to 1269 (CEKE…KSLD) and 1313 to 1418 (LSRH…DKRK). Acidic residues predominate over residues 1242 to 1262 (PAEEDAEEKADEYEEGPEEDS). Residues 1298-1320 (HACDVCGKTFKFAGALSRHKKAH) form a C2H2-type 12 zinc finger. 2 stretches are compositionally biased toward basic and acidic residues: residues 1321 to 1339 (IRED…KSIQ) and 1388 to 1414 (GTER…TAKA). 2 consecutive C2H2-type zinc fingers follow at residues 1419-1441 (KVCT…MRSH) and 1447-1469 (YKCQ…QRIH). Over residues 1464-1477 (RHQRIHQKVKNTRN) the composition is skewed to basic residues. Positions 1464–1585 (RHQRIHQKVK…SELERPSGFI (122 aa)) are disordered. Basic and acidic residues-rich tracts occupy residues 1478 to 1493 (HGKE…RCGE) and 1566 to 1580 (PAKD…ELER).

The protein belongs to the krueppel C2H2-type zinc-finger protein family. As to expression, broadly expressed, except in brain.

It is found in the nucleus. Functionally, transcription factor that binds specifically to the RAS-responsive elements (RRE) of gene promoters. In Gallus gallus (Chicken), this protein is Ras-responsive element-binding protein 1 (RREB1).